A 528-amino-acid polypeptide reads, in one-letter code: MYPNSPSQGRIPLPLPCEQQQPPLEQSQEQPLQPQPLQPQQASGYLSKLPVSVAPELLSPEQFIQASINLHNNVNFARMLMNANLLAVPPVSPPPWSYRDQSPLISPASPSSSFQNRKRRSDEGNIAYDVKRQKFQSPQEQTVNHQAVPLRGDLGCSYPGSPAFPLLQSPSPPVLKGHVPNSGECWLYDHVDTTLPVAKDKLSKQILELFQALQQQVCDLKKKDICRAELQREIQQIFPQSRLYLVGSSLNGFGTRSSDADLCLVLKDEPMNQHTEARHILSLLHKHFYTRLSYIERPQFIKAKVPIVKFRDKVSGAEFDLNVNNVVGIRNTFLLRTYAYIENRVRPLVLVIKMWANYHGLNDASRGTLSSYTLVLMALHYLQTLPEPIIPSLQKKYPECFDSTMQLHLVHHAPRNIPKYLSKNETPLGDLLLGFLKYFAIEFDWSKDIISVREAKALPRSDDYEWRNKFICVEEPYDRTNTARAVYERQKFDMIRAEFLRAWVALRDNRDLYSLLPWKGIMKKMNSL.

Disordered regions lie at residues 1–41 (MYPN…QPQQ) and 99–121 (RDQS…KRRS). Low complexity-rich tracts occupy residues 16–32 (PCEQ…EQPL) and 102–113 (SPLISPASPSSS). The Mg(2+) site is built by Asp-259 and Asp-261. A PAP-associated domain is found at 428-481 (LGDLLLGFLKYFAIEFDWSKDIISVREAKALPRSDDYEWRNKFICVEEPYDRTN).

The protein belongs to the DNA polymerase type-B-like family. GLD2 subfamily. Component of a complex at least composed of cpeb1, cpsf1, tent2/gld2, pabpc1/ePAB, parn and sympk. Following oocyte maturation, parn is expelled from the complex. Interacts with rbm9 and sympk. Mg(2+) is required as a cofactor. It depends on Mn(2+) as a cofactor.

It is found in the cytoplasm. It carries out the reaction RNA(n) + ATP = RNA(n)-3'-adenine ribonucleotide + diphosphate. In terms of biological role, cytoplasmic poly(A) RNA polymerase that adds successive AMP monomers to the 3'-end of specific RNAs, forming a poly(A) tail. In contrast to the canonical nuclear poly(A) RNA polymerase, it only adds poly(A) to selected cytoplasmic mRNAs during oocyte maturation. Plays a central role during oocyte maturation by mediating polyadenylation of dormant mRNAs, which contain 5'AAUAAA-3' sequence in their 3'-UTR. In immature oocytes, polyadenylation of poly(A) tails is counteracted by the ribonuclease parn. During maturation parn is excluded from the ribonucleoprotein complex, allowing poly(A) elongation and activation of mRNAs. May not play a role in replication-dependent histone mRNA degradation. The chain is Poly(A) RNA polymerase GLD2 (tent2) from Xenopus tropicalis (Western clawed frog).